A 764-amino-acid polypeptide reads, in one-letter code: Complement factor B (764 aa).

The first 25 residues, 1–25 (MGSNLSPQLCLMPFILGLLSGGVTT), serve as a signal peptide directing secretion. 3 consecutive Sushi domains span residues 35-100 (GSCS…ECRA), 101-160 (IHCP…ICDN), and 163-220 (GYCS…SCQD). Intrachain disulfides connect cysteine 37–cysteine 76, cysteine 62–cysteine 98, cysteine 103–cysteine 145, cysteine 131–cysteine 158, cysteine 165–cysteine 205, and cysteine 191–cysteine 218. N-linked (GlcNAc...) asparagine glycosylation is found at asparagine 122 and asparagine 142. The VWFA domain maps to 270-469 (NIYLVLDGSD…NLEDVFYQMI (200 aa)). Serine 278 and serine 280 together coordinate Mg(2+). Mn(2+)-binding residues include serine 278 and serine 280. Residue asparagine 285 is glycosylated (N-linked (GlcNAc...) asparagine). Residue lysine 291 is glycosylated (N-linked (Glc) (glycation) lysine). Threonine 353 is a Mg(2+) binding site. A Mn(2+)-binding site is contributed by threonine 353. Asparagine 378 is a glycosylation site (N-linked (GlcNAc...) asparagine). A Peptidase S1 domain is found at 477 to 757 (LCGMVWEHRK…VLPWLKEKLQ (281 aa)). 5 disulfides stabilise this stretch: cysteine 478-cysteine 596, cysteine 511-cysteine 527, cysteine 599-cysteine 615, cysteine 656-cysteine 682, and cysteine 695-cysteine 725. Catalysis depends on charge relay system residues histidine 526 and aspartate 576. Residue serine 699 is the Charge relay system of the active site.

It belongs to the peptidase S1 family. In terms of assembly, monomer. Interacts with complement C3b; this interaction is dependent on the presence of Mg(2+). Catalytic component of the C3 convertase of the alternative complement pathway, also named C3bBb, composed of complement factor B Bb and complement C3b. Catalytic component of the C5 convertase of the alternative complement pathway, also named C3bBb3b, composed of complement factor B Bb and additional molecules of complement C3b. Interacts to CFP; this interaction contributes to the stabilization of the active C3-convertase enzyme complex. Mg(2+) serves as cofactor. It depends on Mn(2+) as a cofactor. Post-translationally, cleaved by CFD following activation of the alternative complement system, generating Ba and Bb chains. Cleavage and activation takes place when CFB is already associated with complement C3b.

It is found in the secreted. It localises to the cell surface. It catalyses the reaction Cleavage of Arg-|-Ser bond in complement component C3 alpha-chain to yield C3a and C3b, and Arg-|-Xaa bond in complement component C5 alpha-chain to yield C5a and C5b.. In terms of biological role, precursor of the catalytic component of the C3 and C5 convertase complexes of the alternative pathway of the complement system, a cascade of proteins that leads to phagocytosis and breakdown of pathogens and signaling that strengthens the adaptive immune system. The alternative complement pathway acts as an amplification loop that enhances other complement pathways (classical, lectin and GZMK) by promoting formation of additional C3 and C5 convertases. CFB is cleaved and activated by CFD to generate Ba and Bb chains; Bb chain constituting the catalytic component of the C3 and C5 convertases. Serine protease component of the complement C3 and C5 convertase complexes of the alternative complement pathway. Following cleavage and activation by factor D (CFD), forms the C3 convertase together with complement C3b. As part of the C3 convertase, cleaves and activates C3 into C3a anaphylatoxin and C3b opsonin, the next components of the complement pathways. When an additional complement C3b molecule binds to the C3 convertase, forms the C5 convertase, which cleaves and activates C5 into C5a anaphylatoxin and C5b component of the membrane attack complex. Functionally, involved in proliferation and differentiation of preactivated B-lymphocytes, rapid spreading of peripheral blood monocytes, stimulation of lymphocyte blastogenesis and lysis of erythrocytes. This is Complement factor B from Homo sapiens (Human).